The primary structure comprises 166 residues: Urease accessory protein UreE (166 aa).

The disordered stretch occupies residues 133–154 (QPEHGAYGGGHHHSRHGDEDFN).

It belongs to the UreE family.

Its subcellular location is the cytoplasm. Functionally, involved in urease metallocenter assembly. Binds nickel. Probably functions as a nickel donor during metallocenter assembly. This is Urease accessory protein UreE from Pseudomonas fluorescens (strain SBW25).